Reading from the N-terminus, the 423-residue chain is Histidine--tRNA ligase (423 aa).

It belongs to the class-II aminoacyl-tRNA synthetase family. As to quaternary structure, homodimer.

The protein localises to the cytoplasm. The enzyme catalyses tRNA(His) + L-histidine + ATP = L-histidyl-tRNA(His) + AMP + diphosphate + H(+). The polypeptide is Histidine--tRNA ligase (Laribacter hongkongensis (strain HLHK9)).